The following is an 890-amino-acid chain: MSKDYDHRGIEAAAQADWERTQVYRVTENAVNASGKKKPKYYACSMLPYPSGKLHMGHVRNYTINDVMARQLRMQGYNVLMPMGWDAFGMPAENAAIQNKVPPAKWTYDNIAYMKKQMAAMGLAIDWSREVATCSPDYYRWNQWLFLKMLEKGVAYRKTQVVNWDPIDQTVLANEQVIDGRGWRSGALVEKREIPGYYFNITAYAEQLLSGLDGLGWPERVKTMQQNWIGKSRGVRFAFKHEIADAHGNFIQDGLLYVFTTRADTIMGVTFCAVAAEHPLASKAAENNPTLAAFIEKCKTGSVIEADLATQEKEGMFTGLYVTHPLTNESVPVWVGNYVLMSYGDGAVMGVPAHDERDFAFALKYELPIKQVIALKDESPMFNGTHWQDWYAQKENVVCFNSGKFDGLSHEEAVNTVASDLEKMGIGELKTTYRLRDWGISRQRYWGTPIPIIHCGDEGNPGCGAVPVPEADLPVVLPEDCVPDGSGNPLNKRADFLNVKCPQCGKPARRETDTMDTFVDSSWYFMRYTGPDATSMVDGRNEYWMPMDQYIGGIEHAILHLLYARFWTKVMRDLDLITFDEPFQNLLTQGMVLNETYYSEEASGKKTWLNPLDVELDLDEKGRPQGAKLKGDSSGTPVIIGGVEKMSKSKNNGVDPQALIDQYGADTARLFVMFAAPPEQQLEWSGAGVDGASRFLRRVWMYSSSQASAIKDAQDALPSTLNDAEKELRREVHAILKQANFDYQRRQYNTVVSAAMKMLNVLEPIKLGQDSPISASVLRECLSILLRVLYPVVPHLTHVLWKDMGYSENFGSLLDAPWPTVDETALIQTEITLMLQINGKLRGELKVPADASKEQIEAIALQSEPATKALNGGAPKKVIVVPGRLINIVA.

Positions 48–58 (PYPSGKLHMGH) match the 'HIGH' region motif. The 'KMSKS' region signature appears at 645–649 (KMSKS). Residue K648 participates in ATP binding.

Belongs to the class-I aminoacyl-tRNA synthetase family.

It localises to the cytoplasm. It catalyses the reaction tRNA(Leu) + L-leucine + ATP = L-leucyl-tRNA(Leu) + AMP + diphosphate. This is Leucine--tRNA ligase from Polynucleobacter asymbioticus (strain DSM 18221 / CIP 109841 / QLW-P1DMWA-1) (Polynucleobacter necessarius subsp. asymbioticus).